A 617-amino-acid polypeptide reads, in one-letter code: Pyrophosphate--fructose 6-phosphate 1-phosphotransferase subunit alpha 2 (617 aa).

It belongs to the phosphofructokinase type A (PFKA) family. PPi-dependent PFK group II subfamily. Clade 'Long' sub-subfamily. As to quaternary structure, tetramer of two alpha (regulatory) and two beta (catalytic) chains. Expressed in roots and specific parts such as the trichomes of leaves, cotyledon veins, as well as in stamen and gynoecium of flowers.

It localises to the cytoplasm. The protein operates within carbohydrate degradation; glycolysis; D-glyceraldehyde 3-phosphate and glycerone phosphate from D-glucose: step 3/4. With respect to regulation, allosterically activated by fructose 2,6-bisphosphate. Its function is as follows. Regulatory subunit of pyrophosphate--fructose 6-phosphate 1-phosphotransferase. This is Pyrophosphate--fructose 6-phosphate 1-phosphotransferase subunit alpha 2 from Arabidopsis thaliana (Mouse-ear cress).